The following is a 149-amino-acid chain: Large ribosomal subunit protein uL22 (149 aa).

The protein belongs to the universal ribosomal protein uL22 family. In terms of assembly, part of the 50S ribosomal subunit.

In terms of biological role, this protein binds specifically to 23S rRNA; its binding is stimulated by other ribosomal proteins, e.g. L4, L17, and L20. It is important during the early stages of 50S assembly. It makes multiple contacts with different domains of the 23S rRNA in the assembled 50S subunit and ribosome. Functionally, the globular domain of the protein is located near the polypeptide exit tunnel on the outside of the subunit, while an extended beta-hairpin is found that lines the wall of the exit tunnel in the center of the 70S ribosome. In Petrotoga mobilis (strain DSM 10674 / SJ95), this protein is Large ribosomal subunit protein uL22.